Consider the following 620-residue polypeptide: Chaperone protein HscA homolog (620 aa).

This sequence belongs to the heat shock protein 70 family.

Its function is as follows. Chaperone involved in the maturation of iron-sulfur cluster-containing proteins. Has a low intrinsic ATPase activity which is markedly stimulated by HscB. This chain is Chaperone protein HscA homolog, found in Shewanella woodyi (strain ATCC 51908 / MS32).